The sequence spans 172 residues: Antibacterial protein PR-39 (172 aa).

The signal sequence occupies residues 1–29 (METQRASLCLGRWSLWLLLLGLVVPSASA). Position 30 is a pyrrolidone carboxylic acid (Gln30). A propeptide spanning residues 30–130 (QALSYREAVL…DISCNEIQSV (101 aa)) is cleaved from the precursor. Residues 61–80 (DQPPKADEDPGTPKPVSFTV) are disordered. 2 cysteine pairs are disulfide-bonded: Cys85–Cys96 and Cys107–Cys124. The tract at residues 130–172 (VRRRPRPPYLPRPRPPPFFPPRLPPRIPPGFPPRFPPRFPGKR) is disordered. The segment covering 136 to 172 (PPYLPRPRPPPFFPPRLPPRIPPGFPPRFPPRFPGKR) has biased composition (pro residues). At Pro169 the chain carries Proline amide.

This sequence belongs to the cathelicidin family. As to expression, small intestine and bone marrow.

The protein resides in the secreted. Its function is as follows. Exerts a potent antimicrobial activity against both E.coli and B.megaterium. This chain is Antibacterial protein PR-39 (PR39), found in Sus scrofa (Pig).